We begin with the raw amino-acid sequence, 261 residues long: Carbonic anhydrase 1 (261 aa).

Alanine 2 carries the post-translational modification N-acetylalanine. The Alpha-carbonic anhydrase domain occupies 4 to 261 (PDWGYDDKNG…LKGRTVRASF (258 aa)). Histidine 65 (proton donor/acceptor) is an active-site residue. Histidine 95, histidine 97, and histidine 120 together coordinate Zn(2+). Residues threonine 200 and 200–201 (TH) each bind substrate. The segment at 238 to 261 (NPVPIQRNNRPTQPLKGRTVRASF) is disordered.

Belongs to the alpha-carbonic anhydrase family. Zn(2+) serves as cofactor.

It localises to the cytoplasm. It carries out the reaction hydrogencarbonate + H(+) = CO2 + H2O. The enzyme catalyses urea = cyanamide + H2O. Its activity is regulated as follows. Inhibited by acetazolamide. Catalyzes the reversible hydration of carbon dioxide. Can hydrate cyanamide to urea. This chain is Carbonic anhydrase 1 (CA1), found in Macaca mulatta (Rhesus macaque).